The primary structure comprises 202 residues: MKNENNISLPQYVTLNIQTLNSSEDKTIRIKAKTLNFPLSSEDLRDISILEKKYDQEENCAGLAAPQIGISKCIIIFAVHEDAELKKWHPDLKDTMPKTIWINPSYKPIGIDKHEDYEGCFSVENATGPVARFKKIHYHAYDINGNQIQGIAEGFLARVIQHEIDHLNGKVFLDYVAPKKIMTKEEYLEMRKKAMEQENIKS.

2 residues coordinate Fe cation: C120 and H162. Residue E163 is part of the active site. Fe cation is bound at residue H166.

This sequence belongs to the polypeptide deformylase family. The cofactor is Fe(2+).

The catalysed reaction is N-terminal N-formyl-L-methionyl-[peptide] + H2O = N-terminal L-methionyl-[peptide] + formate. Functionally, removes the formyl group from the N-terminal Met of newly synthesized proteins. Requires at least a dipeptide for an efficient rate of reaction. N-terminal L-methionine is a prerequisite for activity but the enzyme has broad specificity at other positions. The sequence is that of Peptide deformylase 2 from Rickettsia conorii (strain ATCC VR-613 / Malish 7).